A 185-amino-acid chain; its full sequence is Ribosome-recycling factor (185 aa).

The disordered stretch occupies residues 141–161; sequence KQEKDKKISEDDLKRAEKEVQ.

The protein belongs to the RRF family.

It is found in the cytoplasm. Its function is as follows. Responsible for the release of ribosomes from messenger RNA at the termination of protein biosynthesis. May increase the efficiency of translation by recycling ribosomes from one round of translation to another. The polypeptide is Ribosome-recycling factor (Geotalea uraniireducens (strain Rf4) (Geobacter uraniireducens)).